The primary structure comprises 65 residues: uncharacterized protein (65 aa).

The signal sequence occupies residues 1-16 (MMHVCSLLVSFDVVKS).

This is an uncharacterized protein from Saccharomyces cerevisiae (strain ATCC 204508 / S288c) (Baker's yeast).